The following is a 198-amino-acid chain: ATP-dependent Clp protease proteolytic subunit 1 (198 aa).

Ser98 functions as the Nucleophile in the catalytic mechanism. Residue His123 is part of the active site.

The protein belongs to the peptidase S14 family. In terms of assembly, fourteen ClpP subunits assemble into 2 heptameric rings which stack back to back to give a disk-like structure with a central cavity, resembling the structure of eukaryotic proteasomes.

The protein localises to the cytoplasm. The enzyme catalyses Hydrolysis of proteins to small peptides in the presence of ATP and magnesium. alpha-casein is the usual test substrate. In the absence of ATP, only oligopeptides shorter than five residues are hydrolyzed (such as succinyl-Leu-Tyr-|-NHMec, and Leu-Tyr-Leu-|-Tyr-Trp, in which cleavage of the -Tyr-|-Leu- and -Tyr-|-Trp bonds also occurs).. In terms of biological role, cleaves peptides in various proteins in a process that requires ATP hydrolysis. Has a chymotrypsin-like activity. Plays a major role in the degradation of misfolded proteins. In Leptospira interrogans serogroup Icterohaemorrhagiae serovar copenhageni (strain Fiocruz L1-130), this protein is ATP-dependent Clp protease proteolytic subunit 1.